The chain runs to 317 residues: DNA-directed RNA polymerase subunit alpha (317 aa).

The segment at 1–229 (MLNEFIYPDK…KHYELLENIF (229 aa)) is alpha N-terminal domain (alpha-NTD). The alpha C-terminal domain (alpha-CTD) stretch occupies residues 245 to 317 (AEKLSLSIEE…ELGMNIETQR (73 aa)).

This sequence belongs to the RNA polymerase alpha chain family. As to quaternary structure, homodimer. The RNAP catalytic core consists of 2 alpha, 1 beta, 1 beta' and 1 omega subunit. When a sigma factor is associated with the core the holoenzyme is formed, which can initiate transcription.

It carries out the reaction RNA(n) + a ribonucleoside 5'-triphosphate = RNA(n+1) + diphosphate. Functionally, DNA-dependent RNA polymerase catalyzes the transcription of DNA into RNA using the four ribonucleoside triphosphates as substrates. In Aquifex aeolicus (strain VF5), this protein is DNA-directed RNA polymerase subunit alpha.